A 208-amino-acid chain; its full sequence is N-(5'-phosphoribosyl)anthranilate isomerase (208 aa).

Belongs to the TrpF family.

It catalyses the reaction N-(5-phospho-beta-D-ribosyl)anthranilate = 1-(2-carboxyphenylamino)-1-deoxy-D-ribulose 5-phosphate. It participates in amino-acid biosynthesis; L-tryptophan biosynthesis; L-tryptophan from chorismate: step 3/5. This Neisseria meningitidis serogroup B (strain ATCC BAA-335 / MC58) protein is N-(5'-phosphoribosyl)anthranilate isomerase.